The chain runs to 212 residues: CRIB domain-containing protein RIC6 (212 aa).

In terms of domain architecture, CRIB spans isoleucine 34–glycine 47. The interval proline 51–phenylalanine 212 is disordered. A compositionally biased stretch (polar residues) spans alanine 53 to asparagine 65. Residues alanine 106–lysine 121 are compositionally biased toward basic and acidic residues. Positions glutamate 192–serine 202 are enriched in polar residues.

In terms of assembly, interacts with ARAC11/ROP1. As to expression, expressed in flowers and pollen.

Its subcellular location is the cell membrane. Functionally, functions as a downstream effector of Rho-related GTP binding proteins of the 'Rho of Plants' (ROPs) family. Participates in the propagation of ROP GTPase signals in specific cellular responses. Is involved in pollen tube growth regulation through its interaction with ARAC11/ROP1. The polypeptide is CRIB domain-containing protein RIC6 (RIC6) (Arabidopsis thaliana (Mouse-ear cress)).